Consider the following 459-residue polypeptide: Ribulose bisphosphate carboxylase/oxygenase activase, chloroplastic (459 aa).

164-171 (GGKGQGKS) lines the ATP pocket.

This sequence belongs to the RuBisCO activase family.

The protein resides in the plastid. The protein localises to the chloroplast stroma. Functionally, activation of RuBisCO (ribulose-1,5-bisphosphate carboxylase/oxygenase; EC 4.1.1.39) involves the ATP-dependent carboxylation of the epsilon-amino group of lysine leading to a carbamate structure. This chain is Ribulose bisphosphate carboxylase/oxygenase activase, chloroplastic, found in Solanum pennellii (Tomato).